The primary structure comprises 483 residues: Altronate oxidoreductase (483 aa).

18–29 (IIQFGEGNFLRA) lines the NAD(+) pocket.

It belongs to the mannitol dehydrogenase family. UxaB subfamily.

It carries out the reaction D-altronate + NAD(+) = keto-D-tagaturonate + NADH + H(+). Its pathway is carbohydrate metabolism; pentose and glucuronate interconversion. The polypeptide is Altronate oxidoreductase (Shigella flexneri serotype 5b (strain 8401)).